A 360-amino-acid chain; its full sequence is Photosystem II protein D1 (360 aa).

3 helical membrane-spanning segments follow: residues 29-46 (YIGWFGVLMIPTLVSAIA), 118-133 (HFLIGVACYLGREWEL), and 142-156 (WICVAFSAPVAAATA). Residue His-118 participates in chlorophyll a binding. Tyr-126 lines the pheophytin a pocket. Residues Asp-170 and Glu-189 each contribute to the [CaMn4O5] cluster site. The chain crosses the membrane as a helical span at residues 197-218 (FHMLGVAGVFGGSLFSAMHGSL). His-198 contacts chlorophyll a. A quinone is bound by residues His-215 and 264-265 (SF). A Fe cation-binding site is contributed by His-215. A Fe cation-binding site is contributed by His-272. The helical transmembrane segment at 274 to 288 (FLAAWPVIGIWFTAL) threads the bilayer. 4 residues coordinate [CaMn4O5] cluster: His-332, Glu-333, Asp-342, and Ala-344. The propeptide occupies 345-360 (AGDVAPVALTAPPING).

This sequence belongs to the reaction center PufL/M/PsbA/D family. As to quaternary structure, PSII is composed of 1 copy each of membrane proteins PsbA, PsbB, PsbC, PsbD, PsbE, PsbF, PsbH, PsbI, PsbJ, PsbK, PsbL, PsbM, PsbT, PsbX, PsbY, PsbZ, Psb30/Ycf12, peripheral proteins PsbO, CyanoQ (PsbQ), PsbU, PsbV and a large number of cofactors. It forms dimeric complexes. The D1/D2 heterodimer binds P680, chlorophylls that are the primary electron donor of PSII, and subsequent electron acceptors. It shares a non-heme iron and each subunit binds pheophytin, quinone, additional chlorophylls, carotenoids and lipids. D1 provides most of the ligands for the Mn4-Ca-O5 cluster of the oxygen-evolving complex (OEC). There is also a Cl(-1) ion associated with D1 and D2, which is required for oxygen evolution. The PSII complex binds additional chlorophylls, carotenoids and specific lipids. serves as cofactor. In terms of processing, tyr-161 forms a radical intermediate that is referred to as redox-active TyrZ, YZ or Y-Z. C-terminally processed by CtpA; processing is essential to allow assembly of the oxygen-evolving complex and thus photosynthetic growth.

The protein resides in the cellular thylakoid membrane. The catalysed reaction is 2 a plastoquinone + 4 hnu + 2 H2O = 2 a plastoquinol + O2. Its function is as follows. Photosystem II (PSII) is a light-driven water:plastoquinone oxidoreductase that uses light energy to abstract electrons from H(2)O, generating O(2) and a proton gradient subsequently used for ATP formation. It consists of a core antenna complex that captures photons, and an electron transfer chain that converts photonic excitation into a charge separation. The D1/D2 (PsbA/PsbD) reaction center heterodimer binds P680, the primary electron donor of PSII as well as several subsequent electron acceptors. The polypeptide is Photosystem II protein D1 (Trichormus azollae (Anabaena azollae)).